A 700-amino-acid polypeptide reads, in one-letter code: Tectonic-2 (700 aa).

Residues 1–25 (MGSLSPLSLLWGLLLLQGVLRPLRG) form the signal peptide. The Extracellular portion of the chain corresponds to 26–665 (DPVFIPPFIR…YYQGEPQSQC (640 aa)). N-linked (GlcNAc...) asparagine glycosylation is found at N76, N82, N146, N156, and N389. The chain crosses the membrane as a helical span at residues 666–682 (VAKGLMLLSLLMLAILL). At 683–700 (RHPWVRMCKARDSAAIYH) the chain is on the cytoplasmic side.

The protein belongs to the tectonic family. In terms of assembly, part of the tectonic-like complex (also named B9 complex). As to expression, significant expression is observed in brain, kidney and eye.

The protein localises to the membrane. It localises to the cytoplasm. It is found in the cytoskeleton. Its subcellular location is the cilium basal body. Component of the tectonic-like complex, a complex localized at the transition zone of primary cilia and acting as a barrier that prevents diffusion of transmembrane proteins between the cilia and plasma membranes. Required for hedgehog signaling transduction. In Mus musculus (Mouse), this protein is Tectonic-2 (Tctn2).